The following is a 94-amino-acid chain: Putative pterin-4-alpha-carbinolamine dehydratase (94 aa).

It belongs to the pterin-4-alpha-carbinolamine dehydratase family.

The enzyme catalyses (4aS,6R)-4a-hydroxy-L-erythro-5,6,7,8-tetrahydrobiopterin = (6R)-L-erythro-6,7-dihydrobiopterin + H2O. This Mycobacterium avium (strain 104) protein is Putative pterin-4-alpha-carbinolamine dehydratase.